A 344-amino-acid chain; its full sequence is tRNA N6-adenosine threonylcarbamoyltransferase (344 aa).

Fe cation-binding residues include His-111 and His-115. Substrate is bound by residues 136–140, Asp-169, Gly-182, and Asn-279; that span reads LVSGG. A Fe cation-binding site is contributed by Asp-307.

The protein belongs to the KAE1 / TsaD family. Fe(2+) is required as a cofactor.

It is found in the cytoplasm. The enzyme catalyses L-threonylcarbamoyladenylate + adenosine(37) in tRNA = N(6)-L-threonylcarbamoyladenosine(37) in tRNA + AMP + H(+). Required for the formation of a threonylcarbamoyl group on adenosine at position 37 (t(6)A37) in tRNAs that read codons beginning with adenine. Is involved in the transfer of the threonylcarbamoyl moiety of threonylcarbamoyl-AMP (TC-AMP) to the N6 group of A37, together with TsaE and TsaB. TsaD likely plays a direct catalytic role in this reaction. This chain is tRNA N6-adenosine threonylcarbamoyltransferase, found in Mannheimia succiniciproducens (strain KCTC 0769BP / MBEL55E).